A 356-amino-acid polypeptide reads, in one-letter code: MTERRIIHIDMDYFFAQVEMRDNPKLKGKPVIVGGKASHRGVVSTASYEARAYGVHSAMPMTQAHKLCPNGYYVTSRFDTYREVSGQIMKIFRSYTELVEPMSLDEAYLDITHLVRPDLPASTIANYIRRDIYEVTRLTASAGVSYNKFLAKLASGMNKPNGLTVIDYNNVHEILMQLDIGDFPGVGKASKKKMHQHHIYTGQDLYNKDEFELIRLFGKRGRGLYNKARGIDHNEVKASRVRKSVGTERTFSTDVNDDDVILRKIRELSGKTAERLNKIQKSGKTVTVKIKTYQYETISKQKSLRDPIRTETDIYNIAYTLYNDLKDPEIPIRLIGVTVGSLEQSDFKNLTIYDFI.

The UmuC domain maps to 6-187 (IIHIDMDYFF…LDIGDFPGVG (182 aa)). Mg(2+)-binding residues include Asp-10 and Asp-105. Glu-106 is an active-site residue.

The protein belongs to the DNA polymerase type-Y family. In terms of assembly, monomer. Requires Mg(2+) as cofactor.

It is found in the cytoplasm. It catalyses the reaction DNA(n) + a 2'-deoxyribonucleoside 5'-triphosphate = DNA(n+1) + diphosphate. Its function is as follows. Poorly processive, error-prone DNA polymerase involved in untargeted mutagenesis. Copies undamaged DNA at stalled replication forks, which arise in vivo from mismatched or misaligned primer ends. These misaligned primers can be extended by PolIV. Exhibits no 3'-5' exonuclease (proofreading) activity. May be involved in translesional synthesis, in conjunction with the beta clamp from PolIII. The sequence is that of DNA polymerase IV from Staphylococcus epidermidis (strain ATCC 12228 / FDA PCI 1200).